Here is an 82-residue protein sequence, read N- to C-terminus: Acyl carrier protein (82 aa).

The region spanning 3-81 (LSREKVLESI…DAVDFIIAAK (79 aa)) is the Carrier domain. S41 carries the post-translational modification O-(pantetheine 4'-phosphoryl)serine.

It belongs to the acyl carrier protein (ACP) family. 4'-phosphopantetheine is transferred from CoA to a specific serine of apo-ACP by AcpS. This modification is essential for activity because fatty acids are bound in thioester linkage to the sulfhydryl of the prosthetic group.

Its subcellular location is the cytoplasm. The protein operates within lipid metabolism; fatty acid biosynthesis. Functionally, carrier of the growing fatty acid chain in fatty acid biosynthesis. This Tropheryma whipplei (strain Twist) (Whipple's bacillus) protein is Acyl carrier protein.